The chain runs to 286 residues: Energy-coupling factor transporter ATP-binding protein EcfA2 (286 aa).

One can recognise an ABC transporter domain in the interval 3–246; it reads IRFDNVSYTY…KEKLADWHIG (244 aa). Residue 40-47 participates in ATP binding; the sequence is GQTGSGKS.

Belongs to the ABC transporter superfamily. Energy-coupling factor EcfA family. As to quaternary structure, forms a stable energy-coupling factor (ECF) transporter complex composed of 2 membrane-embedded substrate-binding proteins (S component), 2 ATP-binding proteins (A component) and 2 transmembrane proteins (T component).

It localises to the cell membrane. ATP-binding (A) component of a common energy-coupling factor (ECF) ABC-transporter complex. Unlike classic ABC transporters this ECF transporter provides the energy necessary to transport a number of different substrates. This is Energy-coupling factor transporter ATP-binding protein EcfA2 from Staphylococcus aureus (strain MRSA252).